Consider the following 129-residue polypeptide: Small ribosomal subunit protein uS11 (129 aa).

Belongs to the universal ribosomal protein uS11 family. As to quaternary structure, part of the 30S ribosomal subunit. Interacts with proteins S7 and S18. Binds to IF-3.

In terms of biological role, located on the platform of the 30S subunit, it bridges several disparate RNA helices of the 16S rRNA. Forms part of the Shine-Dalgarno cleft in the 70S ribosome. The chain is Small ribosomal subunit protein uS11 from Nitratidesulfovibrio vulgaris (strain DSM 19637 / Miyazaki F) (Desulfovibrio vulgaris).